Reading from the N-terminus, the 274-residue chain is Bis(5'-nucleosyl)-tetraphosphatase, symmetrical (274 aa).

The protein belongs to the Ap4A hydrolase family.

The catalysed reaction is P(1),P(4)-bis(5'-adenosyl) tetraphosphate + H2O = 2 ADP + 2 H(+). Its function is as follows. Hydrolyzes diadenosine 5',5'''-P1,P4-tetraphosphate to yield ADP. This Shewanella oneidensis (strain ATCC 700550 / JCM 31522 / CIP 106686 / LMG 19005 / NCIMB 14063 / MR-1) protein is Bis(5'-nucleosyl)-tetraphosphatase, symmetrical.